An 87-amino-acid polypeptide reads, in one-letter code: Hemocyanin alpha chain (87 aa).

This sequence belongs to the tyrosinase family. Hemocyanin subfamily. In terms of assembly, polymer that contains six different types of chains (alpha, beta, gamma, delta, epsilon, and zeta). As to expression, hemolymph.

Its subcellular location is the secreted. The protein localises to the extracellular space. Hemocyanins are copper-containing oxygen carriers occurring freely dissolved in the hemolymph of many mollusks and arthropods. This is Hemocyanin alpha chain from Tachypleus tridentatus (Japanese horseshoe crab).